A 282-amino-acid polypeptide reads, in one-letter code: Bis(5'-nucleosyl)-tetraphosphatase, symmetrical (282 aa).

The protein belongs to the Ap4A hydrolase family.

The enzyme catalyses P(1),P(4)-bis(5'-adenosyl) tetraphosphate + H2O = 2 ADP + 2 H(+). Functionally, hydrolyzes diadenosine 5',5'''-P1,P4-tetraphosphate to yield ADP. This Paraburkholderia phymatum (strain DSM 17167 / CIP 108236 / LMG 21445 / STM815) (Burkholderia phymatum) protein is Bis(5'-nucleosyl)-tetraphosphatase, symmetrical.